Reading from the N-terminus, the 493-residue chain is Glutamyl-tRNA(Gln) amidotransferase subunit A (493 aa).

Residues lysine 78 and serine 158 each act as charge relay system in the active site. The Acyl-ester intermediate role is filled by serine 182.

The protein belongs to the amidase family. GatA subfamily. In terms of assembly, heterotrimer of A, B and C subunits.

The catalysed reaction is L-glutamyl-tRNA(Gln) + L-glutamine + ATP + H2O = L-glutaminyl-tRNA(Gln) + L-glutamate + ADP + phosphate + H(+). Functionally, allows the formation of correctly charged Gln-tRNA(Gln) through the transamidation of misacylated Glu-tRNA(Gln) in organisms which lack glutaminyl-tRNA synthetase. The reaction takes place in the presence of glutamine and ATP through an activated gamma-phospho-Glu-tRNA(Gln). This chain is Glutamyl-tRNA(Gln) amidotransferase subunit A, found in Methylocella silvestris (strain DSM 15510 / CIP 108128 / LMG 27833 / NCIMB 13906 / BL2).